An 84-amino-acid chain; its full sequence is Acyl carrier protein (84 aa).

The Carrier domain occupies 1–75; sequence MIFQKIQEFI…DILEYIQQHV (75 aa). Ser35 carries the O-(pantetheine 4'-phosphoryl)serine modification.

This sequence belongs to the acyl carrier protein (ACP) family. In terms of processing, 4'-phosphopantetheine is transferred from CoA to a specific serine of apo-ACP by AcpS. This modification is essential for activity because fatty acids are bound in thioester linkage to the sulfhydryl of the prosthetic group.

The protein resides in the cytoplasm. The protein operates within lipid metabolism; fatty acid biosynthesis. In terms of biological role, carrier of the growing fatty acid chain in fatty acid biosynthesis. The polypeptide is Acyl carrier protein (Phytoplasma mali (strain AT)).